An 82-amino-acid polypeptide reads, in one-letter code: Chaplin-E (82 aa).

The signal sequence occupies residues 1–27 (MKNLKKAAAVTMVAGGLIAAGAGMASA). Positions 41–81 (SPGVASGNLVQAPIHIPVNAVGNSVNVIGVLNPAFGNLGVN) constitute a Chaplin domain.

It belongs to the chaplin family. Short chaplin subfamily.

The protein resides in the cell surface. Its subcellular location is the secreted. The protein localises to the cell wall. It localises to the fimbrium. One of 8 partially redundant surface-active proteins required for efficient formation of aerial mycelium; the short chaplins assemble into a hydrophobic, amyloidal fibrillar surface layer that envelopes and protects aerial hyphae and spores, presumably anchored to the long chaplins. Chaplins have an overlapping function with the surface-active SapB peptide; chaplins are essential on minimal medium while on rich medium both chaplins and SapB are required for efficient aerial hyphae formation. Chaplins are also involved in cell attachment to a hydrophobic surface. Forms amyloid fibrils in vitro probably composed of stacked beta-sheets, at low extracellular concentrations individually restores the ability to form aerial hyphae to a chaplin-deficient strain, but does so less well than other short chaplins. A small chaplin extract (ChpD, ChpE, ChpF, ChpG and ChpH) self-assembles into 2 different amyloids; small fibrils at the air-water interface form an amphipathic membrane that resembles spore-surface structures involved in aerial hyphae formation, and hydrophilic fibrils in solution that resemble the fibers that attach cells to a hydrophobic surface. At the air-water interface the hydrophilic surface is in contact with water (probably equivalent to the peptidoglycan layer), while the hydrophobic face is exposed to the air, making the surface of the aerial hyphae hydrophobic. A minimal chaplin strain capable of forming aerial mycelium/hyphae on minimal medium contains ChpC, ChpE and ChpH. The strain also has restored rodlet formation on the hyphae surface. A second strain with ChpA, ChpD and ChpE makes slightly less robust hyphae. This essential chaplin may coordinate the assembly and/or polymerization of the other chaplins. A small chaplin extract applied to a chaplin-deficient strain restores aerial hyphae formation. The small chaplin extract forms an amyloid-like structure similar to that seen on the surface of cells without rodlets (rdlA-rdlB deletions), and is highly surface active, reducing surface tension from 72 to 26 mJ/m(2), which probably allows escape of hyphae from an aqueous environment into air. In Streptomyces coelicolor (strain ATCC BAA-471 / A3(2) / M145), this protein is Chaplin-E.